A 219-amino-acid chain; its full sequence is Salivary IL-4-inducing protein (219 aa).

Positions 1–19 (MKYLLTLLMALSLVNLMLT) are cleaved as a signal peptide. Residues 19–109 (TRPTPEDDGG…KNDPRETYNK (91 aa)) form a disordered region. Low complexity predominate over residues 30–43 (SEEPQTQETTGETT). Residues 72 to 107 (DDTAKKEDDGESKDGEGSEKSDKEKGEPKNDPRETY) show a composition bias toward basic and acidic residues.

In terms of tissue distribution, salivary gland (at protein level).

The protein localises to the secreted. In terms of biological role, induces expression of IL4 in host skin by diverting host CD4 cells away from Th1 and towards Th2 responsiveness. Induces expression of IL10 in host skin. Down-regulates expression of IL12B, IFN-gamma (IFNG) and TNF-alpha (TNF) in host skin. This Aedes aegypti (Yellowfever mosquito) protein is Salivary IL-4-inducing protein.